Here is a 274-residue protein sequence, read N- to C-terminus: Oxidized low-density lipoprotein receptor 1 (274 aa).

Residues 1 to 16 (MAVDDLKVKPMKDQPD) show a composition bias toward basic and acidic residues. The disordered stretch occupies residues 1 to 25 (MAVDDLKVKPMKDQPDQKSNGKKPK). Residues 1–31 (MAVDDLKVKPMKDQPDQKSNGKKPKGLRFLS) lie on the Cytoplasmic side of the membrane. Residues 32–54 (SPWWCPAAVALGVLCLGSLMTII) traverse the membrane as a helical; Signal-anchor for type II membrane protein segment. Residues Cys-36 and Cys-46 are each lipidated (S-palmitoyl cysteine). Residues 55-150 (MLGMQLLQVS…SGPCPEDWLW (96 aa)) are neck. At 55-274 (MLGMQLLQVS…QKKANLLRSE (220 aa)) the chain is on the extracellular side. N-linked (GlcNAc...) asparagine glycosylation is found at Asn-73 and Asn-139. Residues 84–139 (QVLAQQQAEAASQESQRELKEMIETLAKRLDEKSKKQMELNHQYLNLQEALKRMDN) adopt a coiled-coil conformation. Cystine bridges form between Cys-144–Cys-155, Cys-172–Cys-264, and Cys-243–Cys-256. A C-type lectin domain is found at 151-265 (HGKNCYLFSS…CILVAYSICQ (115 aa)).

In terms of assembly, homodimer; disulfide-linked. May form a hexamer composed of 3 homodimers. Interacts with HSP70. N-glycosylated.

The protein resides in the cell membrane. It localises to the membrane raft. It is found in the secreted. Functionally, receptor that mediates the recognition, internalization and degradation of oxidatively modified low density lipoprotein (oxLDL) by vascular endothelial cells. OxLDL is a marker of atherosclerosis that induces vascular endothelial cell activation and dysfunction, resulting in pro-inflammatory responses, pro-oxidative conditions and apoptosis. Its association with oxLDL induces the activation of NF-kappa-B through an increased production of intracellular reactive oxygen and a variety of pro-atherogenic cellular responses including a reduction of nitric oxide (NO) release, monocyte adhesion and apoptosis. In addition to binding oxLDL, it acts as a receptor for the HSP70 protein involved in antigen cross-presentation to naive T-cells in dendritic cells, thereby participating in cell-mediated antigen cross-presentation. Also involved in inflammatory process, by acting as a leukocyte-adhesion molecule at the vascular interface in endotoxin-induced inflammation. Also acts as a receptor for advanced glycation end (AGE) products, activated platelets, monocytes, apoptotic cells and both Gram-negative and Gram-positive bacteria. This chain is Oxidized low-density lipoprotein receptor 1 (OLR1), found in Oryctolagus cuniculus (Rabbit).